The chain runs to 244 residues: tRNA pseudouridine synthase A (244 aa).

Catalysis depends on aspartate 52, which acts as the Nucleophile. Tyrosine 110 is a substrate binding site.

It belongs to the tRNA pseudouridine synthase TruA family. As to quaternary structure, homodimer.

It catalyses the reaction uridine(38/39/40) in tRNA = pseudouridine(38/39/40) in tRNA. Functionally, formation of pseudouridine at positions 38, 39 and 40 in the anticodon stem and loop of transfer RNAs. The chain is tRNA pseudouridine synthase A from Geobacter sulfurreducens (strain ATCC 51573 / DSM 12127 / PCA).